A 321-amino-acid chain; its full sequence is Probable endolytic peptidoglycan transglycosylase RlpA (321 aa).

The protein belongs to the RlpA family.

Lytic transglycosylase with a strong preference for naked glycan strands that lack stem peptides. This is Probable endolytic peptidoglycan transglycosylase RlpA from Synechocystis sp. (strain ATCC 27184 / PCC 6803 / Kazusa).